The chain runs to 76 residues: ATP synthase subunit 9, mitochondrial (76 aa).

The next 2 helical transmembrane spans lie at 14–34 (IATIGLLGAGIGIAIVFAALI) and 52–72 (ILGFALSEATGLFCLMISFLL).

Belongs to the ATPase C chain family. F-type ATPases have 2 components, CF(1) - the catalytic core - and CF(0) - the membrane proton channel. CF(1) has five subunits: alpha(3), beta(3), gamma(1), delta(1), epsilon(1). CF(0) has three main subunits: a, b and c.

It is found in the mitochondrion membrane. Functionally, mitochondrial membrane ATP synthase (F(1)F(0) ATP synthase or Complex V) produces ATP from ADP in the presence of a proton gradient across the membrane which is generated by electron transport complexes of the respiratory chain. F-type ATPases consist of two structural domains, F(1) - containing the extramembraneous catalytic core and F(0) - containing the membrane proton channel, linked together by a central stalk and a peripheral stalk. During catalysis, ATP synthesis in the catalytic domain of F(1) is coupled via a rotary mechanism of the central stalk subunits to proton translocation. Part of the complex F(0) domain. A homomeric c-ring of probably 10 subunits is part of the complex rotary element. In Wickerhamomyces canadensis (Yeast), this protein is ATP synthase subunit 9, mitochondrial (ATP9).